The sequence spans 106 residues: Large ribosomal subunit protein uL24 (106 aa).

The protein belongs to the universal ribosomal protein uL24 family. In terms of assembly, part of the 50S ribosomal subunit.

Its function is as follows. One of two assembly initiator proteins, it binds directly to the 5'-end of the 23S rRNA, where it nucleates assembly of the 50S subunit. In terms of biological role, one of the proteins that surrounds the polypeptide exit tunnel on the outside of the subunit. The polypeptide is Large ribosomal subunit protein uL24 (Orientia tsutsugamushi (strain Boryong) (Rickettsia tsutsugamushi)).